The sequence spans 507 residues: L-threonine dehydratase biosynthetic IlvA (507 aa).

Lysine 52 is subject to N6-(pyridoxal phosphate)lysine. Residues asparagine 79, 182-186 (GGGGL), and serine 309 contribute to the pyridoxal 5'-phosphate site. 2 consecutive ACT-like domains span residues 333-404 (AVFA…DLTH) and 427-498 (RLFR…EESA).

The protein belongs to the serine/threonine dehydratase family. Homotetramer. It depends on pyridoxal 5'-phosphate as a cofactor.

The catalysed reaction is L-threonine = 2-oxobutanoate + NH4(+). Its pathway is amino-acid biosynthesis; L-isoleucine biosynthesis; 2-oxobutanoate from L-threonine: step 1/1. Functionally, catalyzes the anaerobic formation of alpha-ketobutyrate and ammonia from threonine in a two-step reaction. The first step involved a dehydration of threonine and a production of enamine intermediates (aminocrotonate), which tautomerizes to its imine form (iminobutyrate). Both intermediates are unstable and short-lived. The second step is the nonenzymatic hydrolysis of the enamine/imine intermediates to form 2-ketobutyrate and free ammonia. In the low water environment of the cell, the second step is accelerated by RidA. This chain is L-threonine dehydratase biosynthetic IlvA (ilvA), found in Burkholderia multivorans (strain ATCC 17616 / 249).